A 104-amino-acid polypeptide reads, in one-letter code: Evasin P1174 (104 aa).

An N-terminal signal peptide occupies residues 1–27; sequence LKTFCLFLQIAVFIALGIQIFLCGTDA. 3 cysteine pairs are disulfide-bonded: C40-C59, C44-C61, and C55-C72. 3 N-linked (GlcNAc...) asparagine glycosylation sites follow: N43, N49, and N58. The segment at 85–104 is disordered; that stretch reads KPTSEEIADASPRPKETNSH.

Its subcellular location is the secreted. Functionally, salivary chemokine-binding protein which binds to host chemokines CXCL1 and CXCL8. This chain is Evasin P1174, found in Ixodes ricinus (Common tick).